A 1203-amino-acid polypeptide reads, in one-letter code: Cation-transporting ATPase catp-5 (1203 aa).

The Cytoplasmic segment spans residues 1–68; the sequence is MNTSEREPLL…YAYKETIGRQ (68 aa). The tract at residues 21–42 is disordered; that stretch reads TTDNPSTKIMKREKDNPKAKTT. A helical membrane pass occupies residues 69-89; that stretch reads ILFWLLTIVTLGFYQLLAYWV. Residues 90–209 are Extracellular-facing; it reads KSLFVKVRFQ…RKIYNMNALA (120 aa). Residues 210–230 form a helical membrane-spanning segment; sequence LALTPILVILFKEVLGPFYLF. Residues 231 to 242 lie on the Cytoplasmic side of the membrane; it reads QCFSVALWYSDN. The chain crosses the membrane as a helical span at residues 243 to 263; sequence YAYYASVIVIITVGSAAVAVY. Residues 264 to 297 lie on the Extracellular side of the membrane; the sequence is QMRAQEKRIRNMVGDTISVIVRRDGHDITIDASE. The helical transmembrane segment at 298 to 318 threads the bilayer; sequence IVPMDILILPSNTFILPCDCL. The Cytoplasmic portion of the chain corresponds to 319–414; sequence LMNGTVIVNE…KPQEKEALKD (96 aa). A helical membrane pass occupies residues 415 to 435; sequence VMVFILVLGFIALIGFIYTVI. The Extracellular portion of the chain corresponds to 436–451; it reads EMVSRGESLKHIIIRS. The helical transmembrane segment at 452-472 threads the bilayer; the sequence is LDIITIVVPPALPAAMSVGII. At 473–935 the chain is on the cytoplasmic side; the sequence is NANSRLKKKK…KEGRCALVTS (463 aa). Aspartate 503 functions as the 4-aspartylphosphate intermediate in the catalytic mechanism. Positions 595–617 are disordered; it reads ETQDFDTVQPTVLRPPPEQATYH. Mg(2+) contacts are provided by aspartate 883 and aspartate 887. A helical transmembrane segment spans residues 936–956; sequence YAVSKYMAAYSLNEFLSVMLL. Residues 957–962 lie on the Extracellular side of the membrane; sequence YNDGTN. A helical membrane pass occupies residues 963 to 983; it reads ISDGQFLYIDLVLITLVALFL. The Cytoplasmic segment spans residues 984 to 1007; sequence GNTEASRKLSGIPPPRRLATSAFY. Residues 1008-1028 traverse the membrane as a helical segment; the sequence is FSVFGQMFFNIITQTTGYLLV. At 1029–1046 the chain is on the extracellular side; sequence RGQSWYVPNPEELDNTTT. A helical membrane pass occupies residues 1047 to 1067; the sequence is MIGTTVFFTSCCMYLGYAFVY. Over 1068 to 1085 the chain is Cytoplasmic; that stretch reads SKGHPYRRSVFTNWLLCG. Residues 1086 to 1106 traverse the membrane as a helical segment; sequence IIFVIGAINMVMIFTNMGFLM. Residues 1107–1120 lie on the Extracellular side of the membrane; that stretch reads NLMGFVYVPSTSMR. A helical transmembrane segment spans residues 1121 to 1141; the sequence is FILLAISLAGVFLSLLYEHFF. Over 1142-1203 the chain is Cytoplasmic; that stretch reads VEKVVAIHFE…DRKETIESKC (62 aa).

This sequence belongs to the cation transport ATPase (P-type) (TC 3.A.3) family. Type V subfamily. In terms of tissue distribution, expressed in the 20 intestinal cells and in the excretory cell.

Its subcellular location is the apical cell membrane. It catalyses the reaction ATP + H2O = ADP + phosphate + H(+). In terms of biological role, involved in the uptake and/or transport of polyamines, probably through ATP hydrolysis. This contributes to the maintenance of intracellular polyamine levels. Polyamines are essential for cell proliferation and are implicated in cellular processes, ranging from DNA replication to apoptosis. This Caenorhabditis elegans protein is Cation-transporting ATPase catp-5.